Reading from the N-terminus, the 225-residue chain is Thymidylate kinase (225 aa).

9–16 is an ATP binding site; sequence GIEGCGKT.

Belongs to the thymidylate kinase family.

The catalysed reaction is dTMP + ATP = dTDP + ADP. In terms of biological role, phosphorylation of dTMP to form dTDP in both de novo and salvage pathways of dTTP synthesis. The polypeptide is Thymidylate kinase (Citrifermentans bemidjiense (strain ATCC BAA-1014 / DSM 16622 / JCM 12645 / Bem) (Geobacter bemidjiensis)).